We begin with the raw amino-acid sequence, 708 residues long: Quinohemoprotein alcohol dehydrogenase (708 aa).

The first 31 residues, 1 to 31 (MERLIDNSHGWPGRMVWLLAACLGSAAAFAQ), serve as a signal peptide directing secretion. Glutamate 101 provides a ligand contact to pyrroloquinoline quinone. Cysteines 147 and 148 form a disulfide. Residues arginine 153, threonine 198, and 214-215 (GA) contribute to the pyrroloquinoline quinone site. Residue glutamate 216 participates in Ca(2+) binding. Threonine 274 contributes to the pyrroloquinoline quinone binding site. Ca(2+) is bound by residues asparagine 294 and aspartate 339. Aspartate 339 functions as the Proton acceptor in the catalytic mechanism. Residues lysine 366, 425–426 (NW), and valine 575 each bind pyrroloquinoline quinone. The region spanning 619-708 (YDPAKVEAGT…GTADAIRPKP (90 aa)) is the Cytochrome c domain. Residues cysteine 635, cysteine 638, histidine 639, and methionine 678 each coordinate heme c.

Belongs to the bacterial PQQ dehydrogenase family. As to quaternary structure, monomer. Requires pyrroloquinoline quinone as cofactor. It depends on Ca(2+) as a cofactor. Heme c is required as a cofactor. Post-translationally, in the crystallographic structures Trp-543 is oxidized to 2'-hydroxytryptophan.

Its subcellular location is the periplasm. The enzyme catalyses 2 oxidized [azurin] + a primary alcohol = 2 reduced [azurin] + an aldehyde + 2 H(+). Its function is as follows. Catalyzes the dye-linked oxidation of primary alcohols to the corresponding aldehydes and the (subsequent) oxidation of the aldehydes to carboxylic acids. Methanol is not a substrate. This chain is Quinohemoprotein alcohol dehydrogenase, found in Comamonas testosteroni (Pseudomonas testosteroni).